The following is a 404-amino-acid chain: Proteasomal ubiquitin receptor ADRM1-A (404 aa).

The Pru domain occupies 17–130 (SSSKYLVEFR…RKLNEYLNNP (114 aa)). The span at 195 to 247 (GSGGPTTSSSSSSSRSQSAAVTPSSTTSSTRTTSAPVAPAAAPATTPSPAVSS) shows a compositional bias: low complexity. Disordered stretches follow at residues 195–258 (GSGG…TSPT) and 376–404 (FAKAMQSTSSQKERESSEKKEEEEDMSLD). Residues 248–258 (NDGASEATSPT) show a composition bias toward polar residues. The 113-residue stretch at 278–390 (TGEGGQQVDL…QSTSSQKERE (113 aa)) folds into the DEUBAD domain. Residues 386-395 (QKERESSEKK) show a composition bias toward basic and acidic residues.

It belongs to the ADRM1 family. In terms of assembly, component of the 19S proteasome regulatory particle complex. The 26S proteasome consists of a 20S core particle (CP) and two 19S regulatory subunits (RP).

Its subcellular location is the cytoplasm. It is found in the nucleus. Component of the 26S proteasome, a multiprotein complex involved in the ATP-dependent degradation of ubiquitinated proteins. This complex plays a key role in the maintenance of protein homeostasis by removing misfolded or damaged proteins, which could impair cellular functions, and by removing proteins whose functions are no longer required. Therefore, the proteasome participates in numerous cellular processes, including cell cycle progression, apoptosis, or DNA damage repair. Within the complex, functions as a proteasomal ubiquitin receptor. The sequence is that of Proteasomal ubiquitin receptor ADRM1-A (adrm1-a) from Xenopus laevis (African clawed frog).